Here is a 375-residue protein sequence, read N- to C-terminus: Putative ZDHHC-type palmitoyltransferase 8 (375 aa).

Transmembrane regions (helical) follow at residues 4–24 and 40–60; these read LFDF…TDFL and VVGM…VSLW. The N-linked (GlcNAc...) asparagine glycan is linked to asparagine 95. 3 helical membrane passes run 105–125, 221–241, and 285–305; these read ITFY…YYYY, FILF…LSFF, and YSFI…ILLF. The DHHC domain maps to 176-226; it reads VSDGKWSTINKPKSHHCRICKRCIDSMDHHCPFAANCIGINNHHYFILFIG. N-linked (GlcNAc...) asparagine glycosylation occurs at asparagine 343.

The protein belongs to the DHHC palmitoyltransferase family.

Its subcellular location is the membrane. The catalysed reaction is L-cysteinyl-[protein] + hexadecanoyl-CoA = S-hexadecanoyl-L-cysteinyl-[protein] + CoA. This chain is Putative ZDHHC-type palmitoyltransferase 8, found in Dictyostelium discoideum (Social amoeba).